The following is a 134-amino-acid chain: DNA-directed RNA polymerase subunit omega (134 aa).

This sequence belongs to the RNA polymerase subunit omega family. The RNAP catalytic core consists of 2 alpha, 1 beta, 1 beta' and 1 omega subunit. When a sigma factor is associated with the core the holoenzyme is formed, which can initiate transcription.

It carries out the reaction RNA(n) + a ribonucleoside 5'-triphosphate = RNA(n+1) + diphosphate. Promotes RNA polymerase assembly. Latches the N- and C-terminal regions of the beta' subunit thereby facilitating its interaction with the beta and alpha subunits. The polypeptide is DNA-directed RNA polymerase subunit omega (Rhizobium johnstonii (strain DSM 114642 / LMG 32736 / 3841) (Rhizobium leguminosarum bv. viciae)).